A 601-amino-acid chain; its full sequence is Aspartate--tRNA ligase (601 aa).

Glu183 contacts L-aspartate. The tract at residues 207–210 is aspartate; it reads QIFK. Residue Arg229 coordinates L-aspartate. Residues 229–231 and Gln238 each bind ATP; that span reads RDE. His457 serves as a coordination point for L-aspartate. Glu497 provides a ligand contact to ATP. L-aspartate is bound at residue Arg504. An ATP-binding site is contributed by 549–552; it reads GIDR.

The protein belongs to the class-II aminoacyl-tRNA synthetase family. Type 1 subfamily. Homodimer.

It localises to the cytoplasm. The enzyme catalyses tRNA(Asp) + L-aspartate + ATP = L-aspartyl-tRNA(Asp) + AMP + diphosphate. Catalyzes the attachment of L-aspartate to tRNA(Asp) in a two-step reaction: L-aspartate is first activated by ATP to form Asp-AMP and then transferred to the acceptor end of tRNA(Asp). This is Aspartate--tRNA ligase from Leptospira interrogans serogroup Icterohaemorrhagiae serovar Lai (strain 56601).